The sequence spans 490 residues: Betaine aldehyde dehydrogenase (490 aa).

A K(+)-binding site is contributed by aspartate 93. Glycine 150–tryptophan 152 provides a ligand contact to NAD(+). The Charge relay system role is filled by lysine 162. Lysine 176–glutamate 179 provides a ligand contact to NAD(+). Residue valine 180 coordinates K(+). Glycine 230–serine 233 serves as a coordination point for NAD(+). A K(+)-binding site is contributed by leucine 246. Glutamate 252 acts as the Proton acceptor in catalysis. NAD(+) is bound by residues glycine 254, cysteine 286, and glutamate 387. Cysteine 286 serves as the catalytic Nucleophile. At cysteine 286 the chain carries Cysteine sulfenic acid (-SOH). K(+) contacts are provided by lysine 457 and glycine 460. Catalysis depends on glutamate 464, which acts as the Charge relay system.

Belongs to the aldehyde dehydrogenase family. As to quaternary structure, dimer of dimers. It depends on K(+) as a cofactor.

The enzyme catalyses betaine aldehyde + NAD(+) + H2O = glycine betaine + NADH + 2 H(+). It functions in the pathway amine and polyamine biosynthesis; betaine biosynthesis via choline pathway; betaine from betaine aldehyde: step 1/1. Functionally, involved in the biosynthesis of the osmoprotectant glycine betaine. Catalyzes the irreversible oxidation of betaine aldehyde to the corresponding acid. The chain is Betaine aldehyde dehydrogenase from Yersinia pseudotuberculosis serotype O:3 (strain YPIII).